Consider the following 310-residue polypeptide: MLLRIALILGCWSILSEGAENDIAEREDRKRPIWNMAHMVNAISQIHEFGALGANSIETDVSFDKNAKPEYTFHGIPCDCFRNCMNWEYFNHFLEGLRNATTPGNPKYRDRMILVVFDLKSNGLYYDAQARDAGKNLALSLLQNYWNNGDNGGRAYIVLSVPLLKHYELFQGFRETLKEQGHEELLEKVGYDFSGNDDISDIEEAYRLAGISEHIWQSDGITNCIYRGFDRVIQAVNAREKFEGIIKKVYFWTADKPSTVKLALGESVDGIMTNYPNVVVDVLKIDEYQQRFRFATIDDNPWEKYKPYGK.

A signal peptide spans 1–18; sequence MLLRIALILGCWSILSEG. The propeptide occupies 19 to 26; sequence AENDIAER. Residue His38 is part of the active site. Mg(2+) is bound by residues Glu58 and Asp60. Catalysis depends on His74, which acts as the Nucleophile. 2 cysteine pairs are disulfide-bonded: Cys78–Cys84 and Cys80–Cys224. An N-linked (GlcNAc...) asparagine glycan is attached at Asn99. Asp118 serves as a coordination point for Mg(2+).

The protein belongs to the arthropod phospholipase D family. Class II subfamily. Mg(2+) is required as a cofactor. As to expression, expressed by the venom gland.

It localises to the secreted. It carries out the reaction an N-(acyl)-sphingosylphosphocholine = an N-(acyl)-sphingosyl-1,3-cyclic phosphate + choline. It catalyses the reaction an N-(acyl)-sphingosylphosphoethanolamine = an N-(acyl)-sphingosyl-1,3-cyclic phosphate + ethanolamine. The catalysed reaction is a 1-acyl-sn-glycero-3-phosphocholine = a 1-acyl-sn-glycero-2,3-cyclic phosphate + choline. The enzyme catalyses a 1-acyl-sn-glycero-3-phosphoethanolamine = a 1-acyl-sn-glycero-2,3-cyclic phosphate + ethanolamine. In terms of biological role, dermonecrotic toxins cleave the phosphodiester linkage between the phosphate and headgroup of certain phospholipids (sphingolipid and lysolipid substrates), forming an alcohol (often choline) and a cyclic phosphate. This toxin acts on sphingomyelin (SM). It may also act on ceramide phosphoethanolamine (CPE), lysophosphatidylcholine (LPC) and lysophosphatidylethanolamine (LPE), but not on lysophosphatidylserine (LPS), and lysophosphatidylglycerol (LPG). It acts by transphosphatidylation, releasing exclusively cyclic phosphate products as second products. Induces dermonecrosis, hemolysis, increased vascular permeability, edema, inflammatory response, and platelet aggregation. In Loxosceles intermedia (Brown spider), this protein is Dermonecrotic toxin LiSicTox-alphaII2.